A 302-amino-acid chain; its full sequence is tRNA dimethylallyltransferase (302 aa).

10-17 (GPTATGKS) is a binding site for ATP. 12 to 17 (TATGKS) contacts substrate. The interaction with substrate tRNA stretch occupies residues 35-38 (DSRQ).

This sequence belongs to the IPP transferase family. Monomer. It depends on Mg(2+) as a cofactor.

It catalyses the reaction adenosine(37) in tRNA + dimethylallyl diphosphate = N(6)-dimethylallyladenosine(37) in tRNA + diphosphate. Catalyzes the transfer of a dimethylallyl group onto the adenine at position 37 in tRNAs that read codons beginning with uridine, leading to the formation of N6-(dimethylallyl)adenosine (i(6)A). This Acaryochloris marina (strain MBIC 11017) protein is tRNA dimethylallyltransferase.